The following is a 580-amino-acid chain: uncharacterized protein (580 aa).

5 disordered regions span residues 161–241 (SFSP…SVND), 256–281 (LGSL…SFSD), 325–345 (NVSH…QLLK), 472–495 (PRDT…DNSD), and 544–564 (SAVL…KEVR). The span at 192 to 203 (SNSNSSDTSTDD) shows a compositional bias: low complexity. Composition is skewed to polar residues over residues 223–241 (THSS…SVND) and 256–269 (LGSL…TAQK). The span at 326 to 341 (VSHEEKSHSVQDDKSK) shows a compositional bias: basic and acidic residues. Over residues 481 to 495 (PNLSQSGNINSDNSD) the composition is skewed to polar residues.

This is an uncharacterized protein from Schizosaccharomyces pombe (strain 972 / ATCC 24843) (Fission yeast).